The sequence spans 71 residues: Small ribosomal subunit protein bS21 (71 aa).

Belongs to the bacterial ribosomal protein bS21 family.

The polypeptide is Small ribosomal subunit protein bS21 (Buchnera aphidicola subsp. Schizaphis graminum (strain Sg)).